Here is a 173-residue protein sequence, read N- to C-terminus: C-phycocyanin beta subunit (173 aa).

N4-methylasparagine is present on asparagine 73. (2R,3E)-phycocyanobilin-binding residues include cysteine 83 and cysteine 154.

The protein belongs to the phycobiliprotein family. As to quaternary structure, heterodimer of an alpha and a beta subunit, which further assembles into trimers and the trimers into hexamers. Post-translationally, contains two covalently linked bilin chromophores.

Its subcellular location is the cellular thylakoid membrane. Light-harvesting photosynthetic bile pigment-protein from the phycobiliprotein complex (phycobilisome, PBS). Phycocyanin is the major phycobiliprotein in the PBS rod. The polypeptide is C-phycocyanin beta subunit (cpcB1) (Synechococcus elongatus (strain ATCC 33912 / PCC 7942 / FACHB-805) (Anacystis nidulans R2)).